A 304-amino-acid polypeptide reads, in one-letter code: Methionyl-tRNA formyltransferase (304 aa).

Serine 106–proline 109 lines the (6S)-5,6,7,8-tetrahydrofolate pocket.

The protein belongs to the Fmt family.

It carries out the reaction L-methionyl-tRNA(fMet) + (6R)-10-formyltetrahydrofolate = N-formyl-L-methionyl-tRNA(fMet) + (6S)-5,6,7,8-tetrahydrofolate + H(+). Attaches a formyl group to the free amino group of methionyl-tRNA(fMet). The formyl group appears to play a dual role in the initiator identity of N-formylmethionyl-tRNA by promoting its recognition by IF2 and preventing the misappropriation of this tRNA by the elongation apparatus. This Thermosipho africanus (strain TCF52B) protein is Methionyl-tRNA formyltransferase.